A 486-amino-acid polypeptide reads, in one-letter code: ATP synthase subunit beta (486 aa).

171 to 178 (GGAGVGKT) contributes to the ATP binding site.

The protein belongs to the ATPase alpha/beta chains family. As to quaternary structure, F-type ATPases have 2 components, CF(1) - the catalytic core - and CF(0) - the membrane proton channel. CF(1) has five subunits: alpha(3), beta(3), gamma(1), delta(1), epsilon(1). CF(0) has three main subunits: a(1), b(2) and c(9-12). The alpha and beta chains form an alternating ring which encloses part of the gamma chain. CF(1) is attached to CF(0) by a central stalk formed by the gamma and epsilon chains, while a peripheral stalk is formed by the delta and b chains.

Its subcellular location is the cell membrane. The catalysed reaction is ATP + H2O + 4 H(+)(in) = ADP + phosphate + 5 H(+)(out). In terms of biological role, produces ATP from ADP in the presence of a proton gradient across the membrane. The catalytic sites are hosted primarily by the beta subunits. This chain is ATP synthase subunit beta, found in Salinispora tropica (strain ATCC BAA-916 / DSM 44818 / JCM 13857 / NBRC 105044 / CNB-440).